The following is a 290-amino-acid chain: Elongation factor Ts (290 aa).

The tract at residues 83–86 (TDFV) is involved in Mg(2+) ion dislocation from EF-Tu.

It belongs to the EF-Ts family.

It is found in the cytoplasm. In terms of biological role, associates with the EF-Tu.GDP complex and induces the exchange of GDP to GTP. It remains bound to the aminoacyl-tRNA.EF-Tu.GTP complex up to the GTP hydrolysis stage on the ribosome. The chain is Elongation factor Ts (tsf) from Aquifex aeolicus (strain VF5).